Consider the following 407-residue polypeptide: Vancomycin aglycone glucosyltransferase (407 aa).

It belongs to the glycosyltransferase 28 family.

It carries out the reaction vancomycin aglycone + UDP-alpha-D-glucose = devancoaminyl-vancomycin + UDP. The protein operates within antibiotic biosynthesis; vancomycin biosynthesis. Glucosyltransferase that transfers glucose to the 4-OH-Phegly(4) residue of vancomycin aglycone (AGV) to produce devancoaminyl-vancomycin (DVV) in the biosynthesis of glycopeptide antibiotic chloroeremomycin, a member of the vancomycin group of antibiotics. In Amycolatopsis orientalis (Nocardia orientalis), this protein is Vancomycin aglycone glucosyltransferase (gtfB).